We begin with the raw amino-acid sequence, 300 residues long: Recombination-associated protein RdgC (300 aa).

This sequence belongs to the RdgC family.

It is found in the cytoplasm. Its subcellular location is the nucleoid. Functionally, may be involved in recombination. In Herminiimonas arsenicoxydans, this protein is Recombination-associated protein RdgC.